A 134-amino-acid polypeptide reads, in one-letter code: Profilin-2 (134 aa).

Cys13 and Cys118 are joined by a disulfide. Residues Ala84–Thr100 carry the Involved in PIP2 interaction motif. Phosphothreonine is present on Thr114.

This sequence belongs to the profilin family. As to quaternary structure, occurs in many kinds of cells as a complex with monomeric actin in a 1:1 ratio. Post-translationally, phosphorylated by MAP kinases.

It is found in the cytoplasm. The protein localises to the cytoskeleton. Its function is as follows. Binds to actin and affects the structure of the cytoskeleton. At high concentrations, profilin prevents the polymerization of actin, whereas it enhances it at low concentrations. The protein is Profilin-2 of Olea europaea (Common olive).